Here is a 292-residue protein sequence, read N- to C-terminus: AKT-interacting protein (292 aa).

Positions M1–S11 are enriched in polar residues. The tract at residues M1 to T63 is disordered. Over residues K14–L23 the composition is skewed to basic and acidic residues. S30 carries the post-translational modification Phosphoserine. The 149-residue stretch at Y74–A222 folds into the UBC core domain.

The protein belongs to the ubiquitin-conjugating enzyme family. FTS subfamily. Component of the FTS/Hook/FHIP complex (FHF complex), composed of AKTIP/FTS, FHIP1B, and one or more members of the Hook family of proteins HOOK1, HOOK2, and HOOK3. Interacts directly with HOOK1, HOOK2 and HOOK3. The FHF complex associates with the homotypic vesicular sorting complex (the HOPS complex). Also interacts with AKT1. May interact with FHIP1A.

The protein localises to the cytoplasm. Its subcellular location is the cell membrane. In terms of biological role, component of the FTS/Hook/FHIP complex (FHF complex). The FHF complex may function to promote vesicle trafficking and/or fusion via the homotypic vesicular protein sorting complex (the HOPS complex). Regulates apoptosis by enhancing phosphorylation and activation of AKT1. Increases release of TNFSF6 via the AKT1/GSK3B/NFATC1 signaling cascade. FHF complex promotes the distribution of AP-4 complex to the perinuclear area of the cell. This chain is AKT-interacting protein, found in Homo sapiens (Human).